A 206-amino-acid chain; its full sequence is Small ribosomal subunit protein uS4c (206 aa).

Residues 94–152 (MRLDNIVFRLGMAPTIPAARQLVNHRHILVNDFTVNIPSYSCKLGDKISVQKRFESKTN) form the S4 RNA-binding domain.

The protein belongs to the universal ribosomal protein uS4 family. As to quaternary structure, part of the 30S ribosomal subunit. Contacts protein S5. The interaction surface between S4 and S5 is involved in control of translational fidelity.

The protein localises to the plastid. It is found in the chloroplast. Its function is as follows. One of the primary rRNA binding proteins, it binds directly to 16S rRNA where it nucleates assembly of the body of the 30S subunit. Functionally, with S5 and S12 plays an important role in translational accuracy. The chain is Small ribosomal subunit protein uS4c (rps4) from Chara vulgaris (Common stonewort).